Reading from the N-terminus, the 567-residue chain is Proline--tRNA ligase (567 aa).

This sequence belongs to the class-II aminoacyl-tRNA synthetase family. ProS type 1 subfamily. As to quaternary structure, homodimer.

It is found in the cytoplasm. The enzyme catalyses tRNA(Pro) + L-proline + ATP = L-prolyl-tRNA(Pro) + AMP + diphosphate. Its function is as follows. Catalyzes the attachment of proline to tRNA(Pro) in a two-step reaction: proline is first activated by ATP to form Pro-AMP and then transferred to the acceptor end of tRNA(Pro). As ProRS can inadvertently accommodate and process non-cognate amino acids such as alanine and cysteine, to avoid such errors it has two additional distinct editing activities against alanine. One activity is designated as 'pretransfer' editing and involves the tRNA(Pro)-independent hydrolysis of activated Ala-AMP. The other activity is designated 'posttransfer' editing and involves deacylation of mischarged Ala-tRNA(Pro). The misacylated Cys-tRNA(Pro) is not edited by ProRS. The protein is Proline--tRNA ligase of Idiomarina loihiensis (strain ATCC BAA-735 / DSM 15497 / L2-TR).